The following is a 408-amino-acid chain: Peptidase T (408 aa).

His78 serves as a coordination point for Zn(2+). The active site involves Asp80. Asp141 lines the Zn(2+) pocket. Glu175 serves as the catalytic Proton acceptor. Positions 176, 198, and 380 each coordinate Zn(2+).

The protein belongs to the peptidase M20B family. The cofactor is Zn(2+).

Its subcellular location is the cytoplasm. The catalysed reaction is Release of the N-terminal residue from a tripeptide.. In terms of biological role, cleaves the N-terminal amino acid of tripeptides. The sequence is that of Peptidase T from Clostridium botulinum (strain Loch Maree / Type A3).